A 293-amino-acid polypeptide reads, in one-letter code: Aquaporin-6 (293 aa).

Topologically, residues 1 to 22 (MEPGLCSRAYLLVGGLWTAISK) are cytoplasmic. A helical membrane pass occupies residues 23-43 (ALFAEFLATGLYVFFGVGSVL). Over 44–51 (PWPVALPS) the chain is Extracellular. Residues 52-70 (VLQIAITFNLATATAVQIS) form a helical membrane-spanning segment. Topologically, residues 71 to 75 (WKTSG) are cytoplasmic. Residues 76 to 85 (AHANPAVTLA) constitute an intramembrane region (discontinuously helical). The NPA 1 signature appears at 79–81 (NPA). Topologically, residues 86-96 (YLVGSHISLPR) are cytoplasmic. The chain crosses the membrane as a helical span at residues 97–118 (AMAYIAAQLAGATAGAALLYGV). At 119 to 138 (TPGGIRETLGVNVVHNSTST) the chain is on the extracellular side. A glycan (N-linked (GlcNAc...) asparagine) is linked at Asn134. The helical transmembrane segment at 139-159 (GQAVAVELVLTLQLVLCVFAS) threads the bilayer. At 160–165 (MDGRQT) the chain is on the cytoplasmic side. Residues 166–185 (LASPAAMIGTSVALGHLIGI) traverse the membrane as a helical segment. The Extracellular segment spans residues 186 to 189 (YFTG). Positions 190 to 202 (CSMNPARSFGPAV) form an intramembrane region, discontinuously helical. The short motif at 193-195 (NPA) is the NPA 2 element. Residues 203–210 (IVGKFAVH) lie on the Extracellular side of the membrane. A helical membrane pass occupies residues 211–231 (WIFWVGPLTGAVLASLIYNFI). Residues 232–293 (LFPDTKTVAQ…RSFSFTLGLC (62 aa)) are Cytoplasmic-facing.

Belongs to the MIP/aquaporin (TC 1.A.8) family. As to quaternary structure, homotetramer; each monomer provides an independent solute pore.

The protein localises to the cytoplasmic vesicle membrane. It catalyses the reaction nitrate(in) = nitrate(out). It carries out the reaction iodide(out) = iodide(in). The enzyme catalyses bromide(in) = bromide(out). The catalysed reaction is chloride(in) = chloride(out). It catalyses the reaction Na(+)(in) = Na(+)(out). It carries out the reaction H2O(in) = H2O(out). The enzyme catalyses CO2(out) = CO2(in). The catalysed reaction is NH4(+)(in) = NH4(+)(out). Aquaporins form homotetrameric transmembrane channels, with each monomer independently mediating water transport across the plasma membrane along its osmotic gradient. Unlike classical aquaporins, AQP6 is an intracellular channel with selective anion permeability, particularly for nitrate, and exhibits very low water permeability. It may also facilitate the transport of gases, such as CO2 and NH4(+), as demonstrated in vitro. The chain is Aquaporin-6 from Mus musculus (Mouse).